The sequence spans 331 residues: Adenosine deaminase (331 aa).

Positions 12 and 14 each coordinate Zn(2+). Substrate-binding residues include H14, D16, and G170. A Zn(2+)-binding site is contributed by H197. E200 serves as the catalytic Proton donor. D278 provides a ligand contact to Zn(2+). Position 279 (D279) interacts with substrate.

The protein belongs to the metallo-dependent hydrolases superfamily. Adenosine and AMP deaminases family. Adenosine deaminase subfamily. Zn(2+) serves as cofactor.

The enzyme catalyses adenosine + H2O + H(+) = inosine + NH4(+). It carries out the reaction 2'-deoxyadenosine + H2O + H(+) = 2'-deoxyinosine + NH4(+). In terms of biological role, catalyzes the hydrolytic deamination of adenosine and 2-deoxyadenosine. In Shewanella denitrificans (strain OS217 / ATCC BAA-1090 / DSM 15013), this protein is Adenosine deaminase.